A 213-amino-acid polypeptide reads, in one-letter code: Virulence factor 1 (213 aa).

The protein resides in the host mitochondrion. In terms of biological role, plays a role in antagonizing the host innate immune response. The polypeptide is Virulence factor 1 (Norovirus (isolate Mouse/NoV/United States/MNV1/2002/GV) (MNV-1)).